Reading from the N-terminus, the 277-residue chain is Inhibition of morphological differentiation protein (277 aa).

Positions 18, 20, and 192 each coordinate Mg(2+).

Belongs to the HAD-like hydrolase superfamily. SerB family.

The protein is Inhibition of morphological differentiation protein of Streptomyces azureus.